Here is a 688-residue protein sequence, read N- to C-terminus: Potassium-transporting ATPase ATP-binding subunit (688 aa).

4 consecutive transmembrane segments (helical) span residues 34–54 (PVMFVVYLGSWLTTLIWLDIL), 62–82 (AMFTGSIALWLWFTVLFANMA), 219–239 (VALTILLVALTIVFLLATATL), and 260–280 (VLVALLVCLIPTTIGGLLSAI). Residue Asp313 is the 4-aspartylphosphate intermediate of the active site. Residues Asp350, Glu354, 383 to 390 (FSAQTRMS), and Lys401 each bind ATP. Residues Asp524 and Asp528 each contribute to the Mg(2+) site. Transmembrane regions (helical) follow at residues 594–614 (FAIIPAAFAATYPQLNALNIM), 622–642 (AILSAVIFNALVIVFLIPLAL), and 662–682 (IYGLGGLLVPFVGIKLIDLLL).

The protein belongs to the cation transport ATPase (P-type) (TC 3.A.3) family. Type IA subfamily. As to quaternary structure, the system is composed of three essential subunits: KdpA, KdpB and KdpC.

The protein localises to the cell inner membrane. The enzyme catalyses K(+)(out) + ATP + H2O = K(+)(in) + ADP + phosphate + H(+). Functionally, part of the high-affinity ATP-driven potassium transport (or Kdp) system, which catalyzes the hydrolysis of ATP coupled with the electrogenic transport of potassium into the cytoplasm. This subunit is responsible for energy coupling to the transport system and for the release of the potassium ions to the cytoplasm. The chain is Potassium-transporting ATPase ATP-binding subunit from Yersinia pestis bv. Antiqua (strain Antiqua).